Here is a 640-residue protein sequence, read N- to C-terminus: Threonine--tRNA ligase (640 aa).

The 60-residue stretch at 1–60 (MKITFPDGAVKEFEPGVSTADIAASISPGLKKKALAGKLNGELLDLVTPIHEDGAIEIVT) folds into the TGS domain. Residues 241 to 538 (DHRKLGKELD…LIEEYKGAFP (298 aa)) form a catalytic region. Residues Cys-334, His-385, and His-515 each contribute to the Zn(2+) site.

This sequence belongs to the class-II aminoacyl-tRNA synthetase family. As to quaternary structure, homodimer. Requires Zn(2+) as cofactor.

It localises to the cytoplasm. It catalyses the reaction tRNA(Thr) + L-threonine + ATP = L-threonyl-tRNA(Thr) + AMP + diphosphate + H(+). Functionally, catalyzes the attachment of threonine to tRNA(Thr) in a two-step reaction: L-threonine is first activated by ATP to form Thr-AMP and then transferred to the acceptor end of tRNA(Thr). Also edits incorrectly charged L-seryl-tRNA(Thr). The sequence is that of Threonine--tRNA ligase from Listeria monocytogenes serotype 4b (strain CLIP80459).